We begin with the raw amino-acid sequence, 283 residues long: MFYLIGLGLFDEKDITLRGLETVKKCQRIYLEAYTSILLVQKEKLEELYGKEVILADREMVESSSDEILKDADNCDVAMLVVGDPMGATTHADLVIRARELKIPVRMIHNASIMNAIGACGLQLYKFGQTVSLVFFENNYRPQSFYDHIKENVSLGLHTLVLLDIKVKEQSWENLARGRKVYEPPRYMSASLAAQQMLEVEEDRQENICTPDSLCVAVGRMGSDDQVIFAGTLQELAEHDIGPPLHSVVLVGRDVHDLELEFLRAYAVNLENFDRVAKTYLEK.

S-adenosyl-L-methionine is bound by residues Leu-9, Asp-84, Gly-87, 112 to 113 (SI), Leu-163, Met-221, and His-246.

This sequence belongs to the diphthine synthase family.

Its subcellular location is the cytoplasm. The catalysed reaction is 2-[(3S)-amino-3-carboxypropyl]-L-histidyl-[translation elongation factor 2] + 4 S-adenosyl-L-methionine = diphthine methyl ester-[translation elongation factor 2] + 4 S-adenosyl-L-homocysteine + 3 H(+). Its pathway is protein modification; peptidyl-diphthamide biosynthesis. In terms of biological role, S-adenosyl-L-methionine-dependent methyltransferase that catalyzes four methylations of the modified target histidine residue in translation elongation factor 2 (EF-2), to form an intermediate called diphthine methyl ester. The four successive methylation reactions represent the second step of diphthamide biosynthesis. In Schizosaccharomyces pombe (strain 972 / ATCC 24843) (Fission yeast), this protein is Diphthine methyl ester synthase (dph5).